Reading from the N-terminus, the 220-residue chain is Meiotic nuclear division protein 1 homolog (220 aa).

The stretch at 76–147 (SKALHARKRR…KVEIEKYQEC (72 aa)) forms a coiled coil.

This sequence belongs to the MND1 family.

Its subcellular location is the nucleus. In terms of biological role, required for proper homologous chromosome pairing and efficient cross-over and intragenic recombination during meiosis. Stimulates both DMC1- and RAD51-mediated homologous strand assimilation, which is required for the resolution of meiotic double-strand breaks. This is Meiotic nuclear division protein 1 homolog from Danio rerio (Zebrafish).